The chain runs to 90 residues: uncharacterized protein (90 aa).

Residues 12-32 form a helical membrane-spanning segment; the sequence is VVGGLSFWSFSAGVIMIVNAF.

The protein resides in the membrane. This is an uncharacterized protein from Mycoplasma pneumoniae (strain ATCC 29342 / M129 / Subtype 1) (Mycoplasmoides pneumoniae).